A 1099-amino-acid polypeptide reads, in one-letter code: Adenylate cyclase type 7 (1099 aa).

At 1 to 33 (MPAKGRYFLNEGDEGPDQAALYEKYRLTSLHGP) the chain is on the cytoplasmic side. The next 6 membrane-spanning stretches (helical) occupy residues 34–54 (LLLL…SIAF), 63–83 (QVVL…YVLV), 95–117 (ALAL…DSLE), 122–142 (AWEQ…LLPL), 147–167 (AIVA…AVTR), and 178–198 (LGLQ…TGAF). Topologically, residues 199–595 (HKHQLQDASR…YRLVPIPRAR (397 aa)) are cytoplasmic. Residues D286, I287, and D330 each coordinate Mg(2+). ATP-binding positions include 286–291 (DIVGFT), 328–330 (LGD), and R374. Residues 456–476 (DPRSQQPPPPSHHLSKPKGDA) form a disordered region. Residues 479–484 (KMRASV) form a mediates regulation of adenylate cyclase activity by C5 alpha-induced G- beta and gamma pathway region. The segment at 493–501 (WGAARPFAH) is mediates regulation of adenylate cyclase activity by sphingosine 1-phosphate-induced G alpha 13 pathway. The tract at residues 504–543 (HRESVSSSETPISNGRRQKAIPLRRHRAPDRSASPKGRLE) is disordered. Positions 508–518 (VSSSETPISNG) are enriched in polar residues. The segment at 508–585 (VSSSETPISN…IFLEKGFERE (78 aa)) is modulates adenylate cyclase activity by modulating the binding of G(s)alpha to the high-affinity G(s)alpha binding site in 7C1a/7C2. The segment covering 519–531 (RRQKAIPLRRHRA) has biased composition (basic residues). The next 3 helical transmembrane spans lie at 596–616 (YDFA…LLVM), 621–641 (TLGV…SFCF), and 670–689 (LVLV…INMP). N702 carries N-linked (GlcNAc...) asparagine glycosylation. 3 helical membrane-spanning segments follow: residues 719-738 (LLPY…SVFL), 747-766 (MLLT…SPCW), and 813-833 (DLKI…ILLS). The Cytoplasmic segment spans residues 834 to 1099 (RQIDYYCRLD…TAKFQGLGLN (266 aa)). ATP is bound by residues K950, 1029-1031 (DIW), 1036-1040 (NVASR), and K1076.

Belongs to the adenylyl cyclase class-4/guanylyl cyclase family. Requires Mg(2+) as cofactor. Mn(2+) is required as a cofactor. In terms of processing, phosphorylated by PRKCD. Most abundant in heart, spleen and lung.

It is found in the membrane. The enzyme catalyses ATP = 3',5'-cyclic AMP + diphosphate. Its activity is regulated as follows. Activated by the G protein alpha subunit. Activated by the G protein beta and gamma subunit complex. Activated by GNA13 and GNA12. Ethanol and phorbol 12,13-dibutanoate significantly potentiate adenylate cyclase activity generated in response to the activation of the prostanoid receptor by the agonist prostaglandin E1(1-) in a PKC-dependent manner. Inhibited by lithium. Functionally, catalyzes the formation of cAMP in response to activation of G protein-coupled receptors. Functions in signaling cascades activated namely by thrombin and sphingosine 1-phosphate and mediates regulation of cAMP synthesis through synergistic action of the stimulatory G alpha protein with GNA13. Also, during inflammation, mediates zymosan-induced increase intracellular cAMP, leading to protein kinase A pathway activation in order to modulate innate immune responses through heterotrimeric G proteins G(12/13). Functions in signaling cascades activated namely by dopamine and C5 alpha chain and mediates regulation of cAMP synthesis through synergistic action of the stimulatory G protein with G beta:gamma complex. Functions, through cAMP response regulation, to keep inflammation under control during bacterial infection by sensing the presence of serum factors, such as the bioactive lysophospholipid (LPA) that regulate LPS-induced TNF-alpha production. However, it is also required for the optimal functions of B and T cells during adaptive immune responses by regulating cAMP synthesis in both B and T cells. The polypeptide is Adenylate cyclase type 7 (Mus musculus (Mouse)).